We begin with the raw amino-acid sequence, 749 residues long: Cytosolic phospholipase A2 (749 aa).

In terms of domain architecture, C2 spans 1–124 (MASIDPYQHI…GEKKQVPFTF (124 aa)). A phospholipid binding region spans residues 1 to 178 (MASIDPYQHI…LRKLLGPEKT (178 aa)). Residues Asp-40, Thr-41, Asp-43, Asn-65, Asp-93, Ala-94, and Asn-95 each coordinate Ca(2+). Positions 138–740 (VCSSTDLRFS…NDVESRKLHH (603 aa)) constitute a PLA2c domain. The active-site Nucleophile is the Ser-229. Residues 428-452 (HILGNDSSDSDDEMQEPKGTENAKA) are disordered. Residues 442–452 (QEPKGTENAKA) show a composition bias toward basic and acidic residues. Asp-549 (proton acceptor) is an active-site residue. Positions 729–749 (SLNDVESRKLHHKDSQSKFQM) are disordered. A compositionally biased stretch (basic and acidic residues) spans 733–749 (VESRKLHHKDSQSKFQM).

Its subcellular location is the cytoplasm. The protein localises to the cytoplasmic vesicle. It catalyses the reaction a 1,2-diacyl-sn-glycero-3-phosphocholine + H2O = a 1-acyl-sn-glycero-3-phosphocholine + a fatty acid + H(+). The catalysed reaction is a 1-acyl-sn-glycero-3-phosphocholine + H2O = sn-glycerol 3-phosphocholine + a fatty acid + H(+). Its activity is regulated as follows. Stimulated by agonists such as ATP, EGF, thrombin and bradykinin as well as by cytosolic Ca(2+). In terms of biological role, selectively hydrolyzes arachidonyl phospholipids in the sn-2 position releasing arachidonic acid. Together with its lysophospholipid activity, it is implicated in the initiation of the inflammatory response. This chain is Cytosolic phospholipase A2 (pla2g4a), found in Xenopus laevis (African clawed frog).